Consider the following 146-residue polypeptide: Hemoglobin subunit beta (146 aa).

Valine 1 carries the N-acetylvaline modification. A Globin domain is found at 2–146 (HLTGEEKSAV…VANALAHKYH (145 aa)). Residue threonine 12 is modified to Phosphothreonine. Residue serine 44 is modified to Phosphoserine. An N6-acetyllysine modification is found at lysine 59. Histidine 63 contributes to the heme b binding site. Lysine 82 carries the N6-acetyllysine modification. Histidine 92 is a binding site for heme b. An S-nitrosocysteine modification is found at cysteine 93. Lysine 144 is modified (N6-acetyllysine).

Belongs to the globin family. Heterotetramer of two alpha chains and two beta chains. Red blood cells.

Functionally, involved in oxygen transport from the lung to the various peripheral tissues. The polypeptide is Hemoglobin subunit beta (HBB) (Nycticebus coucang (Slow loris)).